A 902-amino-acid chain; its full sequence is Cytosolic 10-formyltetrahydrofolate dehydrogenase (902 aa).

The interval 1 to 310 (MKIAVIGQSL…PASQYFKTAD (310 aa)) is hydrolase domain. Residue 88-90 (QFI) participates in (6R)-10-formyltetrahydrofolate binding. Histidine 106 acts as the Proton donor in catalysis. Aspartate 142 is a (6R)-10-formyltetrahydrofolate binding site. The Carrier domain occupies 318 to 395 (EEEQKVSEEI…EFIQMVVRRM (78 aa)). Serine 354 bears the O-(pantetheine 4'-phosphoryl)serine mark. Residues 417–902 (TVKIPHQLFI…LKTKAVTIEY (486 aa)) form an aldehyde dehydrogenase domain region. NADP(+) contacts are provided by residues 571–573 (IPW), 597–600 (KPAQ), 630–635 (GSLIGQ), 650–651 (GS), and 673–674 (EL). Catalysis depends on glutamate 673, which acts as the Proton acceptor. Cysteine 707 functions as the Proton donor in the catalytic mechanism. NADP(+) contacts are provided by residues lysine 757 and 804–806 (ESF).

It in the N-terminal section; belongs to the GART family. This sequence in the C-terminal section; belongs to the aldehyde dehydrogenase family. ALDH1L subfamily. As to quaternary structure, homotetramer. Post-translationally, phosphopantetheinylation at Ser-354 by AASDHPPT is required for the formyltetrahydrofolate dehydrogenase activity.

It localises to the cytoplasm. The protein localises to the cytosol. It catalyses the reaction (6R)-10-formyltetrahydrofolate + NADP(+) + H2O = (6S)-5,6,7,8-tetrahydrofolate + CO2 + NADPH + H(+). In terms of biological role, cytosolic 10-formyltetrahydrofolate dehydrogenase that catalyzes the NADP(+)-dependent conversion of 10-formyltetrahydrofolate to tetrahydrofolate and carbon dioxide. May also have an NADP(+)-dependent aldehyde dehydrogenase activity towards formaldehyde, acetaldehyde, propionaldehyde, and benzaldehyde. This is Cytosolic 10-formyltetrahydrofolate dehydrogenase (aldh1l1) from Xenopus laevis (African clawed frog).